Consider the following 560-residue polypeptide: Formate--tetrahydrofolate ligase (560 aa).

69–76 (TPAGEGKS) is a binding site for ATP.

Belongs to the formate--tetrahydrofolate ligase family.

The catalysed reaction is (6S)-5,6,7,8-tetrahydrofolate + formate + ATP = (6R)-10-formyltetrahydrofolate + ADP + phosphate. It participates in one-carbon metabolism; tetrahydrofolate interconversion. The sequence is that of Formate--tetrahydrofolate ligase from Listeria innocua serovar 6a (strain ATCC BAA-680 / CLIP 11262).